The chain runs to 1423 residues: Fructan beta-fructosidase (1423 aa).

An N-terminal signal peptide occupies residues 1-39; it reads MEEETVCKNWFMRKSGKSWIFGCAVFFVLGLATALPVAA. Residues 44–161 are disordered; it reads QTTAADTAVT…TNLEDMSHDT (118 aa). Residues 69 to 126 show a composition bias toward polar residues; the sequence is AVTETTQSEGTASKQLTTPAVADQTTEPTDNEPISSSDGASSPYQVTDTTEPQQTLTP. Residues 455–458, Gln-474, 513–514, 581–582, and Asp-783 each bind substrate; these read WAND, FS, and RD. Asp-458 is a catalytic residue. The involved in binding of sugars with beta-(2,6) linkages or binding of molecular weight fructans stretch occupies residues 867 to 871; the sequence is ASVEV. Positions 924–1002 constitute a BIG2 domain; that stretch reads PVAMNTTTAK…SKENPSLSKT (79 aa). The span at 1368-1385 shows a compositional bias: polar residues; that stretch reads DVNSVQQTEPSVMSSSPK. The segment at 1368-1394 is disordered; it reads DVNSVQQTEPSVMSSSPKATLPDTGDH. An LPXTG sorting signal motif is present at residues 1388 to 1392; sequence LPDTG. Residue Thr-1391 is modified to Pentaglycyl murein peptidoglycan amidated threonine. Residues 1392–1423 constitute a propeptide, removed by sortase; the sequence is GDHKTDLSQLGVLAMIGSFLVEIAGYFKKRKD.

This sequence belongs to the glycosyl hydrolase 32 family.

The protein resides in the secreted. It localises to the cell wall. It carries out the reaction Hydrolysis of terminal, non-reducing (2-&gt;1)- and (2-&gt;6)-linked beta-D-fructofuranose residues in fructans.. Its function is as follows. This protein is a fructanase enzyme which degrades levans and inulins to fructose and also cleaves sucrose into glucose and fructose and can therefore function as an extracellular invertase. This chain is Fructan beta-fructosidase (fruA), found in Streptococcus mutans serotype c (strain ATCC 700610 / UA159).